The following is a 415-amino-acid chain: Teichoic acid D-alanyltransferase (415 aa).

Residues 1-16 lie on the Extracellular side of the membrane; the sequence is MIDFLKQLPHLEPYGN. The chain crosses the membrane as a helical span at residues 17–36; it reads PFYFIYLGIALLPIFIGLFF. The Cytoplasmic segment spans residues 37–40; that stretch reads KKRF. A helical membrane pass occupies residues 41-56; that stretch reads AIYECLVSITFIVLAL. Residues 57–60 are Extracellular-facing; it reads TGTH. A helical membrane pass occupies residues 61–87; sequence ASQILALLFYIVWQIIWVYSYKRYRSQ. The Cytoplasmic portion of the chain corresponds to 88-90; that stretch reads RDN. The chain crosses the membrane as a helical span at residues 91–115; it reads KWVFYLHSFLVVLPLILVKVEPTIN. Residues 116 to 125 lie on the Extracellular side of the membrane; the sequence is GTQSLLNFLG. The helical transmembrane segment at 126–142 threads the bilayer; sequence ISYLTFRAVGMIIEMRD. Over 143-149 the chain is Cytoplasmic; it reads GVLKEFT. The stretch at 150 to 179 is an intramembrane region; that stretch reads LGEFLRFMLFMPTFTSGPIDRFKRFNEDYQ. The Cytoplasmic segment spans residues 180–183; that stretch reads SIPN. Residues 184–227 traverse the membrane as a helical segment; that stretch reads RDELLNMLEQAVKYIMLGFLYKFVLAQIFGSMLLPPLKAQALSQ. Topologically, residues 228 to 232 are extracellular; sequence GGIFN. A helical transmembrane segment spans residues 233-264; that stretch reads LPTLGVMYVYGFDLFFDFAGYSMFALAVSNLM. Residues 265–274 are Cytoplasmic-facing; it reads GIKSPINFDK. An intramembrane segment occupies 275–311; it reads PFISRDMKEFWNRWHMSLSFWFRDFVFMRLVIVLMRN. Topologically, residues 312–316 are cytoplasmic; sequence KVFKN. The chain crosses the membrane as a helical span at residues 317 to 336; it reads RNTTSNVAYIINMMVMGFWH. Histidine 336 is an active-site residue. Residues 337-339 are Extracellular-facing; that stretch reads GIT. A helical transmembrane segment spans residues 340–373; sequence WYYIAYGIFHGIGLVINDAWLRKKKTINKDRKKA. Residues 374 to 381 lie on the Cytoplasmic side of the membrane; it reads GLKPLPEN. A helical transmembrane segment spans residues 382 to 404; that stretch reads KWTKALGIFITFNTVMLSFLIFS. Over 405 to 415 the chain is Extracellular; the sequence is GFLNDLWFTKK.

Belongs to the membrane-bound acyltransferase family.

The protein localises to the cell membrane. It functions in the pathway cell wall biogenesis; lipoteichoic acid biosynthesis. O-acyltransferase that catalyzes D-alanylation of both teichoic acid and lipoteichoic acid (LTA). D-alanylation of LTA plays an important role in modulating the properties of the cell wall in Gram-positive bacteria, influencing the net charge of the cell wall. Catalyzes D-alanylation from DltC carrier protein. The chain is Teichoic acid D-alanyltransferase from Streptococcus thermophilus (strain ATCC BAA-250 / LMG 18311).